Reading from the N-terminus, the 216-residue chain is Adenylate kinase (216 aa).

Gly-11–Thr-16 is a binding site for ATP. An NMP region spans residues Ala-31–Val-60. Residues Thr-32, Arg-37, Glu-58–Val-60, Gly-86–Arg-89, and Gln-93 each bind AMP. The LID stretch occupies residues Gly-127–Asp-163. An ATP-binding site is contributed by Arg-128. Residues Cys-131, Cys-134, Cys-150, and Cys-153 each coordinate Zn(2+). Arg-160 and Arg-171 together coordinate AMP. Ala-199 lines the ATP pocket.

This sequence belongs to the adenylate kinase family. In terms of assembly, monomer.

The protein localises to the cytoplasm. It carries out the reaction AMP + ATP = 2 ADP. It participates in purine metabolism; AMP biosynthesis via salvage pathway; AMP from ADP: step 1/1. Functionally, catalyzes the reversible transfer of the terminal phosphate group between ATP and AMP. Plays an important role in cellular energy homeostasis and in adenine nucleotide metabolism. The protein is Adenylate kinase of Dehalococcoides mccartyi (strain ATCC BAA-2266 / KCTC 15142 / 195) (Dehalococcoides ethenogenes (strain 195)).